The primary structure comprises 522 residues: Alanine aminotransferase 2 (522 aa).

K340 carries the post-translational modification N6-(pyridoxal phosphate)lysine. 3 positions are modified to N6-acetyllysine: K414, K504, and K511.

Belongs to the class-I pyridoxal-phosphate-dependent aminotransferase family. Alanine aminotransferase subfamily. Homodimer. Pyridoxal 5'-phosphate serves as cofactor. In terms of tissue distribution, specifically induced in fatty liver. Highly expressed in muscle, liver and white adipose tissue. Moderately expressed in brain and kidney and expressed at low levels in the heart.

It catalyses the reaction L-alanine + 2-oxoglutarate = pyruvate + L-glutamate. It functions in the pathway amino-acid degradation; L-alanine degradation via transaminase pathway; pyruvate from L-alanine: step 1/1. Catalyzes the reversible transamination between alanine and 2-oxoglutarate to form pyruvate and glutamate. The polypeptide is Alanine aminotransferase 2 (Gpt2) (Mus musculus (Mouse)).